Consider the following 433-residue polypeptide: Forkhead box protein A2-B (433 aa).

Residues 147–241 constitute a DNA-binding region (fork-head); sequence KPPYSYISLI…ENGCYLRRQK (95 aa). Positions 247–260 are enriched in basic and acidic residues; that stretch reads KKPSLREGGGKKLS. Disordered stretches follow at residues 247–337 and 407–433; these read KKPS…QSHL and SGLEPSPISSDTSYYQGGYSRPIMNSS. Residues 261 to 282 are compositionally biased toward low complexity; the sequence is EGASSVGSVGNSSSERSVGNES. Basic and acidic residues predominate over residues 292–302; the sequence is EQKRSLVDMKS. Positions 315-331 are enriched in low complexity; that stretch reads ASQAQHLLSQHHSVLSH. Residues 407–421 are compositionally biased toward polar residues; sequence SGLEPSPISSDTSYY.

It localises to the nucleus. Functionally, acts as a transcriptional activator during early development, limiting the extent of mesoderm formation in the gastrula. Binds to DNA via the target sequence 5'-GT[AC]AACA-3', with 5'-GTAAACA-3' being the preferred binding site. The protein is Forkhead box protein A2-B (foxa2-b) of Xenopus laevis (African clawed frog).